The chain runs to 259 residues: UPF0246 protein PSPA7_1607 (259 aa).

Belongs to the UPF0246 family.

The polypeptide is UPF0246 protein PSPA7_1607 (Pseudomonas paraeruginosa (strain DSM 24068 / PA7) (Pseudomonas aeruginosa (strain PA7))).